Here is a 136-residue protein sequence, read N- to C-terminus: Small ribosomal subunit protein uS19 (136 aa).

Positions 114–136 are disordered; it reads RSRVSHGSAGVGATRSSKFVPLK.

It belongs to the universal ribosomal protein uS19 family.

Protein S19 forms a complex with S13 that binds strongly to the 16S ribosomal RNA. The sequence is that of Small ribosomal subunit protein uS19 from Methanosarcina barkeri (strain Fusaro / DSM 804).